The following is an 84-amino-acid chain: RNA-binding protein Hfq (84 aa).

Residues 9–69 (DRFLNILRTN…VSTIMPESFV (61 aa)) form the Sm domain.

It belongs to the Hfq family. Homohexamer.

In terms of biological role, RNA chaperone that binds small regulatory RNA (sRNAs) and mRNAs to facilitate mRNA translational regulation in response to envelope stress, environmental stress and changes in metabolite concentrations. Also binds with high specificity to tRNAs. This is RNA-binding protein Hfq from Thermosipho africanus (strain TCF52B).